The chain runs to 94 residues: uncharacterized protein (94 aa).

As to expression, specifically expressed in retina and retinal pigment epithelium.

This is an uncharacterized protein from Homo sapiens (Human).